The primary structure comprises 422 residues: Protein krasavietz (422 aa).

Residues 1-26 are disordered; the sequence is MSQKTERPVLSGQRIKTRKRDEREKY. The region spanning 244 to 415 is the W2 domain; the sequence is KLHKAQASQE…QSAEEESESE (172 aa). A phosphoserine mark is found at S407, S412, and S414.

It belongs to the BZW family. As to expression, expressed in mushroom bodies.

Its function is as follows. May be involved in memory formation. The polypeptide is Protein krasavietz (kra) (Drosophila melanogaster (Fruit fly)).